A 156-amino-acid chain; its full sequence is MGISYSVDVDSEASAKAMLRERSISLKHSKAIAREISGETVADAKEYLQAVIDEERSVPFKQHNSGVGHRNDIDGWDAGRYPEKASKDFLKLLSNVSNNADQQGFDADEMVIEHVAPHKVGESQGRKPRAMGRATTWNATLCDVEIVVTETEEVTA.

It belongs to the universal ribosomal protein uL22 family. As to quaternary structure, part of the 50S ribosomal subunit.

In terms of biological role, this protein binds specifically to 23S rRNA. It makes multiple contacts with different domains of the 23S rRNA in the assembled 50S subunit and ribosome. Functionally, the globular domain of the protein is located near the polypeptide exit tunnel on the outside of the subunit, while an extended beta-hairpin is found that lines the wall of the exit tunnel in the center of the 70S ribosome. The chain is Large ribosomal subunit protein uL22 from Halobacterium salinarum (strain ATCC 700922 / JCM 11081 / NRC-1) (Halobacterium halobium).